The sequence spans 835 residues: MNQIEQKWQYIWQEEKAFEVSNASSKPKYYVLEMLPYPSGKIHVGHVRNYSIGDVIARFMTMQGFNVLHPMGWDAFGLPAENAAIKNNSHPKKWTYSNIKNMKKQLKSMGFSYDWSREINSCDPEYYKHEQKFFLELYERNLAYQKESFVNWDPVDNTVLANEQVVDGRGWRSGAIVVKRYLKQWFLKITDYAEELLNEIQNLKEWPEAVRSMQEKWIGKSIGANFHFKIKDNEETTIEVFSTKPETIFGASFIGIAFNHPIIERLVSKTPEILAFITQCSHITRSSELEKAEKEGVFTGLFVTHPFDSNIVLPVIITNFVLMDYGTGAIFGCPAHDECDHELAVKMNLSIKQVIKADMDVQKTAYTEDGILINSDFLNGLTSNEAKQEVIGEFEKLGIGKRSVNYRLKDWGISRQRFWGCPIPMIHCEICGIVPVPYKDLPVTLPDDVNFDGHGNPLDHHPSWKHVNCPKCDKPAVRETDTFDTFFESSWYFTRYCNSNATEMTDKKACDYWLPVDKYIGGIEHAVMHLLYARFFTKVMNEQNYVSVREPFKGLFTQGMVLHATYKDEHNNWLYPEEVVKKGNEFFHKESNNRVVQGRIEKMSKSKKNLIDLETMQEQYGADAIRLFVLSDSPPEKDLEWSASGIEGCSRFINKLEYMFKAIDSLKDDVNSEVNKELNRLVHFTIKHVAEDIKHFALNRAIARMRELSNAISAEISKDKIDVKTVRHGFNVLVQLLNPFIPHITEEIWQKLGNKERLYNLSFPAFDESMLELDTYIMAVQVNGKLRDTYEFKTSVSEDEIKQVTVSLPKVQKFLEGKEPKKIILVPRKIVNILV.

Positions 36–46 (PYPSGKIHVGH) match the 'HIGH' region motif. The short motif at 602–606 (KMSKS) is the 'KMSKS' region element. Residue Lys605 coordinates ATP.

This sequence belongs to the class-I aminoacyl-tRNA synthetase family.

The protein resides in the cytoplasm. It carries out the reaction tRNA(Leu) + L-leucine + ATP = L-leucyl-tRNA(Leu) + AMP + diphosphate. The polypeptide is Leucine--tRNA ligase (Rickettsia conorii (strain ATCC VR-613 / Malish 7)).